We begin with the raw amino-acid sequence, 190 residues long: MQKEPSLIFLTGFSGSGKSTIGPLLANSLGYEFVDLDALIERECGKSINQIFAEAGEAAFRQHEEQTLETLLMRRKTVVSLGGGVLEQPRAFELVRQAGTVVYLKSPVKTLARRLSNKTDRPLLKGEQGEKLSQEEIEQKIAELLARREPRYECADITVETDAKRIGSTVEELTRKIERYMRTLALSSEE.

15 to 20 (GSGKST) is a binding site for ATP. Ser19 is a binding site for Mg(2+). 3 residues coordinate substrate: Asp37, Arg61, and Gly83. Residue Arg121 participates in ATP binding. Arg148 lines the substrate pocket.

It belongs to the shikimate kinase family. In terms of assembly, monomer. Mg(2+) serves as cofactor.

The protein localises to the cytoplasm. The enzyme catalyses shikimate + ATP = 3-phosphoshikimate + ADP + H(+). It participates in metabolic intermediate biosynthesis; chorismate biosynthesis; chorismate from D-erythrose 4-phosphate and phosphoenolpyruvate: step 5/7. Its function is as follows. Catalyzes the specific phosphorylation of the 3-hydroxyl group of shikimic acid using ATP as a cosubstrate. The polypeptide is Shikimate kinase (Chlorobium chlorochromatii (strain CaD3)).